The chain runs to 174 residues: Gamma-crystallin S (174 aa).

Beta/gamma crystallin 'Greek key' domains lie at 2–40 and 41–83; these read GRII…RVES and GAWV…KMIH. A connecting peptide region spans residues 84-89; sequence FVSGSE. 2 consecutive Beta/gamma crystallin 'Greek key' domains span residues 90–130 and 131–173; these read YKIQ…KVLD and GIWI…KRLM.

The protein belongs to the beta/gamma-crystallin family.

Functionally, crystallins are the dominant structural components of the vertebrate eye lens. This Cyprinus carpio (Common carp) protein is Gamma-crystallin S (crygs).